We begin with the raw amino-acid sequence, 457 residues long: Argininosuccinate lyase (457 aa).

It belongs to the lyase 1 family. Argininosuccinate lyase subfamily.

The protein resides in the cytoplasm. The catalysed reaction is 2-(N(omega)-L-arginino)succinate = fumarate + L-arginine. The protein operates within amino-acid biosynthesis; L-arginine biosynthesis; L-arginine from L-ornithine and carbamoyl phosphate: step 3/3. The polypeptide is Argininosuccinate lyase (Escherichia fergusonii (strain ATCC 35469 / DSM 13698 / CCUG 18766 / IAM 14443 / JCM 21226 / LMG 7866 / NBRC 102419 / NCTC 12128 / CDC 0568-73)).